The primary structure comprises 333 residues: Anthranilate phosphoribosyltransferase (333 aa).

5-phospho-alpha-D-ribose 1-diphosphate is bound by residues G81, 84–85 (GD), T89, 91–94 (NIST), 109–117 (KHGNRSVSS), and A121. Anthranilate is bound at residue G81. A Mg(2+)-binding site is contributed by S93. N112 contacts anthranilate. R167 lines the anthranilate pocket. Mg(2+) contacts are provided by D225 and E226.

Belongs to the anthranilate phosphoribosyltransferase family. As to quaternary structure, homodimer. The cofactor is Mg(2+).

The catalysed reaction is N-(5-phospho-beta-D-ribosyl)anthranilate + diphosphate = 5-phospho-alpha-D-ribose 1-diphosphate + anthranilate. The protein operates within amino-acid biosynthesis; L-tryptophan biosynthesis; L-tryptophan from chorismate: step 2/5. In terms of biological role, catalyzes the transfer of the phosphoribosyl group of 5-phosphorylribose-1-pyrophosphate (PRPP) to anthranilate to yield N-(5'-phosphoribosyl)-anthranilate (PRA). This chain is Anthranilate phosphoribosyltransferase, found in Haemophilus influenzae (strain PittGG).